Here is a 597-residue protein sequence, read N- to C-terminus: Glypican-3 (597 aa).

The first 24 residues, 1–24, serve as a signal peptide directing secretion; the sequence is MAGTVRTACLLVAMLLGLGCLGQA. A Pyrrolidone carboxylic acid modification is found at Q25. 7 disulfide bridges follow: C34–C71, C64–C261, C72–C264, C196–C348, C251–C284, C273–C421, and C277–C409. 2 N-linked (GlcNAc...) asparagine glycosylation sites follow: N123 and N240. S351 bears the Phosphoserine mark. N-linked (GlcNAc...) asparagine glycosylation occurs at N417. O-linked (Xyl...) (glycosaminoglycan) serine glycans are attached at residues S494 and S508. The tract at residues 533–553 is disordered; that stretch reads DAPGNKQHGNQKDNEITTSHS.

This sequence belongs to the glypican family. As to quaternary structure, heterodimer; disulfide-linked. Cleavage by a furin-like convertase results in production of alpha and beta chains which form a disulfide-linked heterodimer. Interacts with DPP4. Interacts with FGF2. Interacts with WNT5A. Also interacts with WNT3A and WNT7B. Interacts with hedgehog protein SHH; the heparan sulfate chains are not required for the interaction. Also interacts with hedgehog protein IHH. Interacts with CD81. Interacts with Wnt receptors FZD4, FZD7 and FZD8; the heparan sulfate chains are required for the interaction. In terms of processing, O-glycosylated; contains heparan sulfate and/or chondroitin sulfate. Post-translationally, cleaved intracellularly by a furin-like convertase to generate 2 subunits, alpha and beta, which remain associated through disulfide bonds and are associated with the cell surface via the GPI-anchor. This processing is essential for its role in inhibition of hedgehog signaling. A second proteolytic event may result in cleavage of the protein on the cell surface, separating it from the GPI-anchor and leading to its shedding from the cell surface.

Its subcellular location is the cell membrane. Its function is as follows. Cell surface proteoglycan. Negatively regulates the hedgehog signaling pathway when attached via the GPI-anchor to the cell surface by competing with the hedgehog receptor PTC1 for binding to hedgehog proteins. Binding to the hedgehog protein SHH triggers internalization of the complex by endocytosis and its subsequent lysosomal degradation. Positively regulates the canonical Wnt signaling pathway by binding to the Wnt receptor Frizzled and stimulating the binding of the Frizzled receptor to Wnt ligands. Positively regulates the non-canonical Wnt signaling pathway. Binds to CD81 which decreases the availability of free CD81 for binding to the transcriptional repressor HHEX, resulting in nuclear translocation of HHEX and transcriptional repression. Inhibits the dipeptidyl peptidase activity of DPP4. Plays a role in limb patterning and skeletal development by controlling the cellular response to BMP4. Modulates the effects of growth factors BMP2, BMP7 and FGF7 on renal branching morphogenesis. Required for coronary vascular development. Plays a role in regulating cell movements during gastrulation. The protein is Glypican-3 (Gpc3) of Rattus norvegicus (Rat).